Here is a 349-residue protein sequence, read N- to C-terminus: Large ribosomal subunit protein uL2mz, N-terminal part (349 aa).

This sequence belongs to the universal ribosomal protein uL2 family. In terms of assembly, component of the mitochondrial ribosome large subunit.

The protein resides in the mitochondrion. The sequence is that of Large ribosomal subunit protein uL2mz, N-terminal part from Arabidopsis thaliana (Mouse-ear cress).